The following is a 278-amino-acid chain: tRNA pseudouridine synthase A (278 aa).

Asp51 functions as the Nucleophile in the catalytic mechanism. Position 109 (Tyr109) interacts with substrate.

It belongs to the tRNA pseudouridine synthase TruA family. As to quaternary structure, homodimer.

It carries out the reaction uridine(38/39/40) in tRNA = pseudouridine(38/39/40) in tRNA. Functionally, formation of pseudouridine at positions 38, 39 and 40 in the anticodon stem and loop of transfer RNAs. The protein is tRNA pseudouridine synthase A of Paracidovorax citrulli (strain AAC00-1) (Acidovorax citrulli).